The primary structure comprises 347 residues: MSRHLNVAIVGATGAVGETFLTVLEERNFPIKSLYPLASSRSVGKTVTFRDQELDVLDLAEFDFSKVDLALFSAGGAVSKEYAPKAVAAGCVVVDNTSCFRYEDDIPLVVPGSESSSNRDYTKRGIIANPNCSTIQMVVALKPIYDAVGISRINVATYQSVSGTGKKAISELVAQVGDLLNGRPANVQVYPQQIAFNALPHIDQFEDNGYTREEMKMVWETRKIMEDDSIMVNPTAVRVPVIYGHSEAVHLELKKPLTADDARALLAKAPGVTVVDNLSKASYPTAIKNAVGHDDVFVGRIRQDISHPCGLNLWIVADNIRKGAATNAVQIAEILQREFLLKLSLPQ.

Residues 13–16 (TGAV) and 41–42 (RS) contribute to the NADP(+) site. Phosphate is bound at residue Arg101. Cys132 serves as the catalytic Acyl-thioester intermediate. Gln159 contributes to the substrate binding site. 162–163 (SG) contacts NADP(+). Residue Lys216 participates in phosphate binding. Position 238 (Arg238) interacts with substrate. His245 functions as the Proton acceptor in the catalytic mechanism. Asn319 is an NADP(+) binding site.

The protein belongs to the aspartate-semialdehyde dehydrogenase family. In terms of assembly, homodimer.

The enzyme catalyses L-aspartate 4-semialdehyde + phosphate + NADP(+) = 4-phospho-L-aspartate + NADPH + H(+). It participates in amino-acid biosynthesis; L-lysine biosynthesis via DAP pathway; (S)-tetrahydrodipicolinate from L-aspartate: step 2/4. The protein operates within amino-acid biosynthesis; L-methionine biosynthesis via de novo pathway; L-homoserine from L-aspartate: step 2/3. Its pathway is amino-acid biosynthesis; L-threonine biosynthesis; L-threonine from L-aspartate: step 2/5. Its function is as follows. Catalyzes the NADPH-dependent formation of L-aspartate-semialdehyde (L-ASA) by the reductive dephosphorylation of L-aspartyl-4-phosphate. This is Aspartate-semialdehyde dehydrogenase from Legionella pneumophila.